The chain runs to 169 residues: Large ribosomal subunit protein uL5 (169 aa).

The protein belongs to the universal ribosomal protein uL5 family. Part of the 50S ribosomal subunit; contacts the 5S rRNA and probably tRNA. Forms a bridge to the 30S subunit in the 70S ribosome.

In terms of biological role, this is one of the proteins that bind and probably mediate the attachment of the 5S RNA into the large ribosomal subunit, where it forms part of the central protuberance. In the 70S ribosome it contacts protein S13 of the 30S subunit (bridge B1b), connecting the 2 subunits; this bridge is implicated in subunit movement. May contact the P site tRNA; the 5S rRNA and some of its associated proteins might help stabilize positioning of ribosome-bound tRNAs. The chain is Large ribosomal subunit protein uL5 from Methanococcoides burtonii (strain DSM 6242 / NBRC 107633 / OCM 468 / ACE-M).